Consider the following 784-residue polypeptide: Ribosome biogenesis protein BOP1 homolog (784 aa).

The segment covering 1–11 (MTKKLALKRRG) has biased composition (basic residues). Residues 1–159 (MTKKLALKRR…DSDTSDEEDI (159 aa)) form a disordered region. Acidic residues-rich tracts occupy residues 27–36 (SENEEEEEDL), 45–54 (EDSTDDEGID), 62–73 (SEELQFESDEEG), and 84–111 (AEEDEESSDEEDNEEEGSTDEEEVEDEE). 2 stretches are compositionally biased toward basic and acidic residues: residues 112–123 (KVSKSKQSDDKP) and 138–148 (LPKRDSSKPEY). A compositionally biased stretch (acidic residues) spans 149–158 (QDSDTSDEED). WD repeat units follow at residues 445–486 (GHTD…RTIE), 488–526 (DEVVRCVAWCPNPKLSIIAVATGNRLLLVNPKVGDKVLV), 570–612 (THFK…SQIP), 615–653 (KSKGLIQFVLFHPVKPCFFVATQHNIRIYDLVKQELVKK), 656–695 (TNSKWISGMSIHPKGDNLLVSTYDKKMLWFDLDLSTKPYQ), 699–738 (LHRNAVRSVAFHRRYPLFASGSDDQAVIVSHGMVYNDLLQ), and 754–784 (RDEFGVLDVNWHPVQPWVFSTGADSTIRLYT).

This sequence belongs to the WD repeat BOP1/ERB1 family.

It is found in the nucleus. It localises to the nucleolus. The protein resides in the nucleoplasm. Required for maturation of ribosomal RNAs and formation of the large ribosomal subunit. This chain is Ribosome biogenesis protein BOP1 homolog, found in Drosophila sechellia (Fruit fly).